A 260-amino-acid chain; its full sequence is HTH-type transcriptional repressor NanR (260 aa).

Residues 27–95 (KKLSEMVEEE…NGERARISRP (69 aa)) enclose the HTH gntR-type domain. Positions 55 to 74 (ERELMAFFNVGRPSVREALA) form a DNA-binding region, H-T-H motif.

This sequence belongs to the NanR family.

Its function is as follows. Transcriptional repressor that controls expression of the genes required for the catabolism of sialic acids. This is HTH-type transcriptional repressor NanR from Edwardsiella tarda (strain FL6-60).